Consider the following 313-residue polypeptide: Pseudouridine-5'-phosphate glycosidase (313 aa).

Glu-34 serves as the catalytic Proton donor. Positions 95 and 115 each coordinate substrate. Mn(2+) is bound at residue Asp-147. Substrate is bound at residue Ser-149–Asp-151. The active-site Nucleophile is the Lys-168.

The protein belongs to the pseudouridine-5'-phosphate glycosidase family. Homotrimer. Mn(2+) serves as cofactor.

It catalyses the reaction D-ribose 5-phosphate + uracil = psi-UMP + H2O. Its function is as follows. Catalyzes the reversible cleavage of pseudouridine 5'-phosphate (PsiMP) to ribose 5-phosphate and uracil. Functions biologically in the cleavage direction, as part of a pseudouridine degradation pathway. This is Pseudouridine-5'-phosphate glycosidase from Deinococcus radiodurans (strain ATCC 13939 / DSM 20539 / JCM 16871 / CCUG 27074 / LMG 4051 / NBRC 15346 / NCIMB 9279 / VKM B-1422 / R1).